Consider the following 470-residue polypeptide: Cysteine--tRNA ligase (470 aa).

Residue Cys-28 participates in Zn(2+) binding. Residues 30-40 carry the 'HIGH' region motif; that stretch reads PTVYNYIHIGN. Zn(2+)-binding residues include Cys-212, His-237, and Glu-241. The short motif at 271 to 275 is the 'KMSKS' region element; it reads KMSKS. Lys-274 contacts ATP.

Belongs to the class-I aminoacyl-tRNA synthetase family. As to quaternary structure, monomer. It depends on Zn(2+) as a cofactor.

The protein localises to the cytoplasm. The enzyme catalyses tRNA(Cys) + L-cysteine + ATP = L-cysteinyl-tRNA(Cys) + AMP + diphosphate. The chain is Cysteine--tRNA ligase from Limosilactobacillus reuteri (strain DSM 20016) (Lactobacillus reuteri).